Reading from the N-terminus, the 277-residue chain is Large ribosomal subunit protein uL2 (277 aa).

The interval 219–277 (RPQTRGSAMNPVDHPHGGGEGKKNSGRHPVTPWGKPTKGAKTRRKKASDKLIISRRKGK) is disordered. Over residues 231 to 241 (DHPHGGGEGKK) the composition is skewed to basic and acidic residues. Over residues 256 to 277 (KGAKTRRKKASDKLIISRRKGK) the composition is skewed to basic residues.

Belongs to the universal ribosomal protein uL2 family. Part of the 50S ribosomal subunit. Forms a bridge to the 30S subunit in the 70S ribosome.

Functionally, one of the primary rRNA binding proteins. Required for association of the 30S and 50S subunits to form the 70S ribosome, for tRNA binding and peptide bond formation. It has been suggested to have peptidyltransferase activity; this is somewhat controversial. Makes several contacts with the 16S rRNA in the 70S ribosome. The polypeptide is Large ribosomal subunit protein uL2 (Campylobacter concisus (strain 13826)).